A 209-amino-acid polypeptide reads, in one-letter code: Outer-membrane lipoprotein carrier protein (209 aa).

The first 21 residues, 1–21 (MKLLKLLSVAALSAASMMANA), serve as a signal peptide directing secretion.

The protein belongs to the LolA family. As to quaternary structure, monomer.

The protein localises to the periplasm. Functionally, participates in the translocation of lipoproteins from the inner membrane to the outer membrane. Only forms a complex with a lipoprotein if the residue after the N-terminal Cys is not an aspartate (The Asp acts as a targeting signal to indicate that the lipoprotein should stay in the inner membrane). The protein is Outer-membrane lipoprotein carrier protein of Hahella chejuensis (strain KCTC 2396).